The following is a 386-amino-acid chain: Tryptophan--tRNA ligase (386 aa).

The short motif at 82-90 (PSGPMHIGH) is the 'HIGH' region element. Positions 253–257 (KMSAS) match the 'KMSKS' region motif.

Belongs to the class-I aminoacyl-tRNA synthetase family.

It is found in the cytoplasm. The catalysed reaction is tRNA(Trp) + L-tryptophan + ATP = L-tryptophyl-tRNA(Trp) + AMP + diphosphate + H(+). This chain is Tryptophan--tRNA ligase, found in Pyrococcus horikoshii (strain ATCC 700860 / DSM 12428 / JCM 9974 / NBRC 100139 / OT-3).